The sequence spans 162 residues: Putative ankyrin repeat protein R664 (162 aa).

ANK repeat units follow at residues 10–40 (KKLV…NVNY), 47–78 (NDTP…DVNY), and 82–111 (YHET…NPYL).

This chain is Putative ankyrin repeat protein R664, found in Acanthamoeba polyphaga mimivirus (APMV).